Reading from the N-terminus, the 216-residue chain is Guanylate kinase (216 aa).

The 179-residue stretch at G15 to H193 folds into the Guanylate kinase-like domain. A22–S29 provides a ligand contact to ATP.

The protein belongs to the guanylate kinase family.

It is found in the cytoplasm. The enzyme catalyses GMP + ATP = GDP + ADP. In terms of biological role, essential for recycling GMP and indirectly, cGMP. The polypeptide is Guanylate kinase (Cupriavidus metallidurans (strain ATCC 43123 / DSM 2839 / NBRC 102507 / CH34) (Ralstonia metallidurans)).